Consider the following 208-residue polypeptide: Holliday junction branch migration complex subunit RuvA (208 aa).

A domain I region spans residues 1 to 63; it reads MIGMLTGRVE…QDSVTLYGFL (63 aa). The interval 64–142 is domain II; sequence DRDSKRVFLQ…LNQSDDASAG (79 aa). The tract at residues 143–151 is flexible linker; that stretch reads NAPYQPTVD. A domain III region spans residues 151–208; sequence DAGVEQVVEGLVSLGWRQQDAQRAVNEACAENDVPMPLASDDAPRVLRLALARMDRGR.

The protein belongs to the RuvA family. Homotetramer. Forms an RuvA(8)-RuvB(12)-Holliday junction (HJ) complex. HJ DNA is sandwiched between 2 RuvA tetramers; dsDNA enters through RuvA and exits via RuvB. An RuvB hexamer assembles on each DNA strand where it exits the tetramer. Each RuvB hexamer is contacted by two RuvA subunits (via domain III) on 2 adjacent RuvB subunits; this complex drives branch migration. In the full resolvosome a probable DNA-RuvA(4)-RuvB(12)-RuvC(2) complex forms which resolves the HJ.

It is found in the cytoplasm. Functionally, the RuvA-RuvB-RuvC complex processes Holliday junction (HJ) DNA during genetic recombination and DNA repair, while the RuvA-RuvB complex plays an important role in the rescue of blocked DNA replication forks via replication fork reversal (RFR). RuvA specifically binds to HJ cruciform DNA, conferring on it an open structure. The RuvB hexamer acts as an ATP-dependent pump, pulling dsDNA into and through the RuvAB complex. HJ branch migration allows RuvC to scan DNA until it finds its consensus sequence, where it cleaves and resolves the cruciform DNA. The polypeptide is Holliday junction branch migration complex subunit RuvA (Bifidobacterium longum subsp. infantis (strain ATCC 15697 / DSM 20088 / JCM 1222 / NCTC 11817 / S12)).